We begin with the raw amino-acid sequence, 410 residues long: Multidrug transporter MdfA (410 aa).

At 1–15 the chain is on the cytoplasmic side; that stretch reads MQNKLASGARLGRQA. The helical transmembrane segment at 16 to 36 threads the bilayer; the sequence is LLFPLCLVLYEFSTYIGNDMI. Residues 37–52 are Periplasmic-facing; sequence QPGMLAVVEQYQAGID. The chain crosses the membrane as a helical span at residues 53–73; sequence WVPTSMTAYLAGGMFLQWLLG. Residues 74 to 82 are Cytoplasmic-facing; that stretch reads PLSDRIGRR. A helical transmembrane segment spans residues 83 to 103; it reads PVMLAGVVWFIVTCLAILLAQ. At 104–109 the chain is on the periplasmic side; the sequence is NIEQFT. A helical transmembrane segment spans residues 110–130; sequence LLRFLQGISLCFIGAVGYAAI. Residues 131 to 144 lie on the Cytoplasmic side of the membrane; that stretch reads QESFEEAVCIKITA. Residues 145-165 form a helical membrane-spanning segment; the sequence is LMANVALIAPLLGPLVGAAWI. A topological domain (periplasmic) is located at residue His166. The chain crosses the membrane as a helical span at residues 167–187; the sequence is VLPWEGMFVLFAALAAISFFG. At 188–226 the chain is on the cytoplasmic side; that stretch reads LQRAMPETATRIGEKLSLKELGRDYKLVLKNGRFVAGAL. The helical transmembrane segment at 227–247 threads the bilayer; that stretch reads ALGFVSLPLLAWIAQSPIIII. The Periplasmic segment spans residues 248-255; sequence TGEQLSSY. The helical transmembrane segment at 256–276 threads the bilayer; it reads EYGLLQVPIFGALIAGNLLLA. Residues 277-287 are Cytoplasmic-facing; the sequence is RLTSRRTVRSL. A helical transmembrane segment spans residues 288 to 308; it reads IIMGGWPIMIGLLVAAAATVI. Over 309–314 the chain is Periplasmic; sequence SSHAYL. A helical membrane pass occupies residues 315-335; it reads WMTAGLSIYAFGIGLANAGLV. Topologically, residues 336–346 are cytoplasmic; that stretch reads RLTLFASDMSK. A helical transmembrane segment spans residues 347-367; it reads GTVSAAMGMLQMLIFTVGIEI. Residues 368 to 378 are Periplasmic-facing; that stretch reads SKHAWLNGGNG. Residues 379–399 traverse the membrane as a helical segment; it reads LFNLFNLVNGILWLSLMVIFL. Topologically, residues 400–410 are cytoplasmic; the sequence is KDKQMGNSHEG.

The protein belongs to the major facilitator superfamily. MdfA family. Monomer.

Its subcellular location is the cell inner membrane. Its function is as follows. Efflux pump driven by the proton motive force. Confers resistance to a broad spectrum of chemically unrelated drugs. The polypeptide is Multidrug transporter MdfA (mdfA) (Escherichia coli O6:H1 (strain CFT073 / ATCC 700928 / UPEC)).